The sequence spans 110 residues: Cytochrome c6 (110 aa).

Positions methionine 1 to alanine 25 are cleaved as a signal peptide. The heme c site is built by cysteine 39, cysteine 42, histidine 43, and methionine 83.

It belongs to the cytochrome c family. PetJ subfamily. As to quaternary structure, monomer. Post-translationally, binds 1 heme c group covalently per subunit.

It is found in the plastid. Its subcellular location is the chloroplast thylakoid lumen. Its function is as follows. Functions as an electron carrier between membrane-bound cytochrome b6-f and photosystem I in oxygenic photosynthesis. The protein is Cytochrome c6 (petJ) of Pyropia yezoensis (Susabi-nori).